Consider the following 488-residue polypeptide: Prostaglandin E2 receptor EP4 subtype (488 aa).

Residues 1 to 19 (MSIPGVNASFSSTPERLNS) lie on the Extracellular side of the membrane. A glycan (N-linked (GlcNAc...) asparagine) is linked at asparagine 7. The helical transmembrane segment at 20–43 (PVTIPAVMFIFGVVGNLVAIVVLC) threads the bilayer. Over 44–55 (KSRKEQKETTFY) the chain is Cytoplasmic. A helical membrane pass occupies residues 56 to 79 (TLVCGLAVTDLLGTLLVSPVTIAT). The Extracellular portion of the chain corresponds to 80–96 (YMKGQWPGDQALCDYST). A disulfide bridge links cysteine 92 with cysteine 170. The helical transmembrane segment at 97–115 (FILLFFGLSGLSIICAMSI) threads the bilayer. Over 116-135 (ERYLAINHAYFYSHYVDKRL) the chain is Cytoplasmic. A helical transmembrane segment spans residues 136 to 160 (AGLTLFAVYASNVLFCALPNMGLGR). Topologically, residues 161–184 (SERQYPGTWCFIDWTTNVTAYAAF) are extracellular. A helical membrane pass occupies residues 185-211 (SYMYAGFSSFLILATVLCNVLVCGALL). Over 212–270 (RMLRQFMRRTSLGTEQHHAAAAAAVASVACRGHAAASPALQRLSDFRRRRSFRRIAGAE) the chain is Cytoplasmic. The chain crosses the membrane as a helical span at residues 271–298 (IQMVILLIATSLVVLICSIPLVVRVFIN). Topologically, residues 299-315 (QLYQPSVVKDISRNPDL) are extracellular. The chain crosses the membrane as a helical span at residues 316 to 335 (QAIRIASVNPILDPWIYILL). Residues 336–488 (RKTVLSKAIE…ETLKLSEKCI (153 aa)) are Cytoplasmic-facing. The tract at residues 358–380 (GRDGSAQHCSESRRTSSAMSGHS) is disordered. Phosphoserine is present on residues serine 377, serine 380, serine 382, and serine 385.

It belongs to the G-protein coupled receptor 1 family. In terms of assembly, interacts with FEM1A. Phosphorylation mediates agonist-mediated desensitization by promoting cytoplasmic retention.

Its subcellular location is the cell membrane. Receptor for prostaglandin E2 (PGE2). The activity of this receptor is mediated by G(s) proteins that stimulate adenylate cyclase. Has a relaxing effect on smooth muscle. May play an important role in regulating renal hemodynamics, intestinal epithelial transport, adrenal aldosterone secretion, and uterine function. The chain is Prostaglandin E2 receptor EP4 subtype (Ptger4) from Rattus norvegicus (Rat).